The sequence spans 197 residues: MAEVAQPVPAESQAKHVVYCGVCTLPPEYCEFGGTAKKCEEWLKDAHPDMYQSLYSEEALNSNLATLSVSARERAAKDAAKKEAKAAAAEARDAERKAASKVQIKRVERNKRKHVTVITGLDIYGLENKKIAKDLGKKFATGSSMTRSAGGTEEITVQGDVSDDVKEWLLEVYGKEIPEANIELIEDKKKKKATEAP.

The SUI1 domain occupies 102–173; that stretch reads VQIKRVERNK…DVKEWLLEVY (72 aa).

Belongs to the DENR family. As to quaternary structure, interacts with the 40S ribosomal subunit.

The protein resides in the cytoplasm. The sequence is that of Translation machinery-associated protein 22 (tma22) from Aspergillus niger (strain ATCC MYA-4892 / CBS 513.88 / FGSC A1513).